Reading from the N-terminus, the 438-residue chain is Tol-Pal system protein TolB (438 aa).

An N-terminal signal peptide occupies residues 1 to 36 (MTPAFRRADLTGFLRTYGAALILLLAAMLAWQPAQA).

Belongs to the TolB family. As to quaternary structure, the Tol-Pal system is composed of five core proteins: the inner membrane proteins TolA, TolQ and TolR, the periplasmic protein TolB and the outer membrane protein Pal. They form a network linking the inner and outer membranes and the peptidoglycan layer.

The protein localises to the periplasm. Functionally, part of the Tol-Pal system, which plays a role in outer membrane invagination during cell division and is important for maintaining outer membrane integrity. The chain is Tol-Pal system protein TolB from Bordetella pertussis (strain Tohama I / ATCC BAA-589 / NCTC 13251).